Here is a 418-residue protein sequence, read N- to C-terminus: Gamma-glutamyl phosphate reductase (418 aa).

Belongs to the gamma-glutamyl phosphate reductase family.

It is found in the cytoplasm. It carries out the reaction L-glutamate 5-semialdehyde + phosphate + NADP(+) = L-glutamyl 5-phosphate + NADPH + H(+). The protein operates within amino-acid biosynthesis; L-proline biosynthesis; L-glutamate 5-semialdehyde from L-glutamate: step 2/2. Catalyzes the NADPH-dependent reduction of L-glutamate 5-phosphate into L-glutamate 5-semialdehyde and phosphate. The product spontaneously undergoes cyclization to form 1-pyrroline-5-carboxylate. This Trichlorobacter lovleyi (strain ATCC BAA-1151 / DSM 17278 / SZ) (Geobacter lovleyi) protein is Gamma-glutamyl phosphate reductase.